The sequence spans 235 residues: Phosphatidylserine decarboxylase proenzyme (235 aa).

S204 serves as the catalytic Schiff-base intermediate with substrate; via pyruvic acid. Residue S204 is modified to Pyruvic acid (Ser); by autocatalysis.

It belongs to the phosphatidylserine decarboxylase family. PSD-A subfamily. As to quaternary structure, heterodimer of a large membrane-associated beta subunit and a small pyruvoyl-containing alpha subunit. Pyruvate serves as cofactor. Post-translationally, is synthesized initially as an inactive proenzyme. Formation of the active enzyme involves a self-maturation process in which the active site pyruvoyl group is generated from an internal serine residue via an autocatalytic post-translational modification. Two non-identical subunits are generated from the proenzyme in this reaction, and the pyruvate is formed at the N-terminus of the alpha chain, which is derived from the carboxyl end of the proenzyme. The post-translation cleavage follows an unusual pathway, termed non-hydrolytic serinolysis, in which the side chain hydroxyl group of the serine supplies its oxygen atom to form the C-terminus of the beta chain, while the remainder of the serine residue undergoes an oxidative deamination to produce ammonia and the pyruvoyl prosthetic group on the alpha chain.

Its subcellular location is the cell membrane. It carries out the reaction a 1,2-diacyl-sn-glycero-3-phospho-L-serine + H(+) = a 1,2-diacyl-sn-glycero-3-phosphoethanolamine + CO2. It participates in phospholipid metabolism; phosphatidylethanolamine biosynthesis; phosphatidylethanolamine from CDP-diacylglycerol: step 2/2. Catalyzes the formation of phosphatidylethanolamine (PtdEtn) from phosphatidylserine (PtdSer). The polypeptide is Phosphatidylserine decarboxylase proenzyme (Mycobacterium sp. (strain JLS)).